The primary structure comprises 450 residues: tRNA modification GTPase MnmE (450 aa).

Residues Arg-26, Glu-84, and Lys-123 each contribute to the (6S)-5-formyl-5,6,7,8-tetrahydrofolate site. The TrmE-type G domain maps to 219–376; it reads GMHVVLVGQP…LKAKLLEMIG (158 aa). Asn-229 contributes to the K(+) binding site. GTP contacts are provided by residues 229–234, 248–254, 273–276, and 357–359; these read NVGKSS, TDIAGTT, DTAG, and SAR. Residue Ser-233 coordinates Mg(2+). K(+) contacts are provided by Thr-248, Ile-250, and Thr-253. Residue Thr-254 participates in Mg(2+) binding. Residue Lys-450 coordinates (6S)-5-formyl-5,6,7,8-tetrahydrofolate.

This sequence belongs to the TRAFAC class TrmE-Era-EngA-EngB-Septin-like GTPase superfamily. TrmE GTPase family. As to quaternary structure, homodimer. Heterotetramer of two MnmE and two MnmG subunits. It depends on K(+) as a cofactor.

It localises to the cytoplasm. Its function is as follows. Exhibits a very high intrinsic GTPase hydrolysis rate. Involved in the addition of a carboxymethylaminomethyl (cmnm) group at the wobble position (U34) of certain tRNAs, forming tRNA-cmnm(5)s(2)U34. This Chromobacterium violaceum (strain ATCC 12472 / DSM 30191 / JCM 1249 / CCUG 213 / NBRC 12614 / NCIMB 9131 / NCTC 9757 / MK) protein is tRNA modification GTPase MnmE.